Here is a 341-residue protein sequence, read N- to C-terminus: Glyceraldehyde-3-phosphate dehydrogenase 4 (341 aa).

Residues 13–14 (RI), aspartate 35, and lysine 85 each bind NAD(+). Residues 157-159 (SCT), threonine 188, 217-218 (TG), and arginine 240 contribute to the D-glyceraldehyde 3-phosphate site. The active-site Nucleophile is cysteine 158. Asparagine 322 is an NAD(+) binding site.

This sequence belongs to the glyceraldehyde-3-phosphate dehydrogenase family. Homotetramer.

It is found in the cytoplasm. It catalyses the reaction D-glyceraldehyde 3-phosphate + phosphate + NAD(+) = (2R)-3-phospho-glyceroyl phosphate + NADH + H(+). It functions in the pathway carbohydrate degradation; glycolysis; pyruvate from D-glyceraldehyde 3-phosphate: step 1/5. The sequence is that of Glyceraldehyde-3-phosphate dehydrogenase 4 (gpd-4) from Caenorhabditis elegans.